The primary structure comprises 935 residues: Isoleucine--tRNA ligase (935 aa).

A 'HIGH' region motif is present at residues 58 to 68; the sequence is PYANGSIHVGH. Glu-558 is a binding site for L-isoleucyl-5'-AMP. The 'KMSKS' region motif lies at 599 to 603; it reads KMSKS. Lys-602 provides a ligand contact to ATP. Residues Cys-897, Cys-900, Cys-917, and Cys-920 each coordinate Zn(2+).

It belongs to the class-I aminoacyl-tRNA synthetase family. IleS type 1 subfamily. In terms of assembly, monomer. It depends on Zn(2+) as a cofactor.

It is found in the cytoplasm. It carries out the reaction tRNA(Ile) + L-isoleucine + ATP = L-isoleucyl-tRNA(Ile) + AMP + diphosphate. In terms of biological role, catalyzes the attachment of isoleucine to tRNA(Ile). As IleRS can inadvertently accommodate and process structurally similar amino acids such as valine, to avoid such errors it has two additional distinct tRNA(Ile)-dependent editing activities. One activity is designated as 'pretransfer' editing and involves the hydrolysis of activated Val-AMP. The other activity is designated 'posttransfer' editing and involves deacylation of mischarged Val-tRNA(Ile). In Francisella tularensis subsp. mediasiatica (strain FSC147), this protein is Isoleucine--tRNA ligase.